The following is a 498-amino-acid chain: MAEDSESAASQQSLELDDQDTCGIDGDNEEETEHAKGSPGGDLGAKKKKKKQKRKKEKPNSGGTKSDSASDSQEIKIQPPSKNSTIPVQKLQDIQRAMELLSACQGPARNIDEAAKHRYQFWDTQPVPKLNEVITSHGAIEADKENVRQEPYSLPQGFMWDTLDLGNAEVLRELYTLLNENYVEDDDNMFRFDYSPEFLLWALRPPGWLLQWHCGVRVSSNKKLVGFISAIPANIRIYDSVKKMVEINFLCVHKKLRSKRVAPVLIREITRRVNLEGIFQAVYTAGVVLPKPVATCRYWHRSLNPRKLVEVKFSHLSRNMTLQRTMKLYRLPDATKTSGLRPMEPRDIKAVQELTNTYLKQFHLAPVMDEEEVAHWFLPQEHIIDTFVVENSSGKLTDFLSFYTLPSTVMHHPAHKSLKAAYSFYNIHTETPLLDLMSDALIIAKLKGFDVFNALDLMENKTFLEKLKFGIGDGNLQYYLYNWRCPGTESEKVGLVLQ.

A disordered region spans residues 1 to 87 (MAEDSESAAS…QPPSKNSTIP (87 aa)). Positions 15–32 (ELDDQDTCGIDGDNEEET) are enriched in acidic residues. Ser38 carries the phosphoserine modification. The segment covering 46 to 57 (KKKKKKQKRKKE) has biased composition (basic residues). Residues 61–72 (SGGTKSDSASDS) are compositionally biased toward polar residues. Positions 117, 122, 250, 252, 258, 260, 261, and 262 each coordinate tetradecanoyl-CoA.

Belongs to the NMT family.

It is found in the cytoplasm. The protein localises to the membrane. The catalysed reaction is N-terminal glycyl-[protein] + tetradecanoyl-CoA = N-tetradecanoylglycyl-[protein] + CoA + H(+). It catalyses the reaction N-terminal glycyl-L-lysyl-[protein] + tetradecanoyl-CoA = N-terminal glycyl-(N(6)-tetradecanoyl)-L-lysyl-[protein] + CoA + H(+). Adds a myristoyl group to the N-terminal glycine residue of certain cellular and viral proteins. Also able to mediate N-terminal lysine myristoylation of proteins: catalyzes myristoylation of ARF6 on both 'Gly-2' and 'Lys-3'. Lysine myristoylation is required to maintain ARF6 on membranes during the GTPase cycle. The polypeptide is Glycylpeptide N-tetradecanoyltransferase 2 (NMT2) (Bos taurus (Bovine)).